We begin with the raw amino-acid sequence, 195 residues long: Glycerol-3-phosphate acyltransferase 1 (195 aa).

A run of 5 helical transmembrane segments spans residues 6–26, 52–72, 74–94, 117–137, and 168–188; these read VILT…GHFL, LGIA…FLVV, LGLK…AVAG, LAVY…LTFL, and FGLG…ISLF.

Belongs to the PlsY family. Probably interacts with PlsX.

The protein resides in the cell membrane. The catalysed reaction is an acyl phosphate + sn-glycerol 3-phosphate = a 1-acyl-sn-glycero-3-phosphate + phosphate. It participates in lipid metabolism; phospholipid metabolism. Catalyzes the transfer of an acyl group from acyl-phosphate (acyl-PO(4)) to glycerol-3-phosphate (G3P) to form lysophosphatidic acid (LPA). This enzyme utilizes acyl-phosphate as fatty acyl donor, but not acyl-CoA or acyl-ACP. The protein is Glycerol-3-phosphate acyltransferase 1 of Moorella thermoacetica (strain ATCC 39073 / JCM 9320).